A 339-amino-acid chain; its full sequence is Serpentine receptor class alpha-22 (339 aa).

6 helical membrane passes run 33-53, 110-130, 150-170, 199-219, 250-270, and 284-304; these read IFIS…IQAL, VVDL…VFSL, FIAI…FYIA, VRTM…YLSV, IFII…NLLL, and IALF…VIYF.

It belongs to the nematode receptor-like protein sra family.

Its subcellular location is the membrane. This is Serpentine receptor class alpha-22 (sra-22) from Caenorhabditis elegans.